The chain runs to 934 residues: Bifunctional uridylyltransferase/uridylyl-removing enzyme (934 aa).

Residues 1 to 379 (MSAHDLKLEE…TFSRRKRKLS (379 aa)) form a uridylyltransferase region. The segment at 380 to 736 (DDGAFISENH…AKPHAFEAVT (357 aa)) is uridylyl-removing. Residues 496–613 (VDEHLLRCIA…IDFADTVQTM (118 aa)) enclose the HD domain. ACT domains are found at residues 737–818 (EITV…DMLA) and 848–931 (VIEV…RSPQ).

The protein belongs to the GlnD family. The cofactor is Mg(2+).

It catalyses the reaction [protein-PII]-L-tyrosine + UTP = [protein-PII]-uridylyl-L-tyrosine + diphosphate. The enzyme catalyses [protein-PII]-uridylyl-L-tyrosine + H2O = [protein-PII]-L-tyrosine + UMP + H(+). With respect to regulation, uridylyltransferase (UTase) activity is inhibited by glutamine, while glutamine activates uridylyl-removing (UR) activity. Functionally, modifies, by uridylylation and deuridylylation, the PII regulatory proteins (GlnB and homologs), in response to the nitrogen status of the cell that GlnD senses through the glutamine level. Under low glutamine levels, catalyzes the conversion of the PII proteins and UTP to PII-UMP and PPi, while under higher glutamine levels, GlnD hydrolyzes PII-UMP to PII and UMP (deuridylylation). Thus, controls uridylylation state and activity of the PII proteins, and plays an important role in the regulation of nitrogen assimilation and metabolism. The polypeptide is Bifunctional uridylyltransferase/uridylyl-removing enzyme (Brucella ovis (strain ATCC 25840 / 63/290 / NCTC 10512)).